A 389-amino-acid polypeptide reads, in one-letter code: Oxytocin receptor (389 aa).

Residues 1–27 (MEGELAANWSTEAVNSSAAPPGAEGNC) are disordered. The Extracellular portion of the chain corresponds to 1-38 (MEGELAANWSTEAVNSSAAPPGAEGNCTAGPPRRNEAL). N-linked (GlcNAc...) asparagine glycosylation is found at N8, N15, and N26. Positions 8 to 18 (NWSTEAVNSSA) are enriched in polar residues. A helical transmembrane segment spans residues 39 to 63 (ARVEVAVLCLILFLALSGNACVLLA). Residues 64 to 74 (LRTTRHKHSRL) lie on the Cytoplasmic side of the membrane. A helical membrane pass occupies residues 75–97 (FFFMKHLSIADLVVAVFQVLPQL). Over 98–113 (LWDITFRFYGPDLLCR) the chain is Extracellular. C112 and C187 form a disulfide bridge. The helical transmembrane segment at 114–135 (LVKYLQVVGMFASTYLLLLMSL) threads the bilayer. Over 136–154 (DRCLAICQPLRSLRRRTDR) the chain is Cytoplasmic. The chain crosses the membrane as a helical span at residues 155 to 175 (LAVLATWLGCLVASAPQVHIF). The Extracellular segment spans residues 176–202 (SLREVADGVFDCWAVFIQPWGPKAYIT). Residues 203–225 (WITLAVYIVPVIVLAACYGLISF) traverse the membrane as a helical segment. The Cytoplasmic portion of the chain corresponds to 226–275 (KIWQNLRLKTAAAAAAEAPEGAAAGDGGRMALARVSSVKLISKAKIRTVK). A helical membrane pass occupies residues 276–294 (MTFIIVLAFIVCWTPFFFV). The Extracellular portion of the chain corresponds to 295–309 (QMWSVWDANAPKEAS). A helical membrane pass occupies residues 310–332 (AFIIVMLLASLNSCCNPWIYMLF). Residues 333–389 (TGHLFHELVQRFLCCSASYLKGNRLGETSTSKKSNSSSFVLSHRSSSQRSCSQPSTA) are Cytoplasmic-facing. The interval 358–389 (GETSTSKKSNSSSFVLSHRSSSQRSCSQPSTA) is disordered. Over residues 360–389 (TSTSKKSNSSSFVLSHRSSSQRSCSQPSTA) the composition is skewed to low complexity. Residues S366 and S368 each carry the phosphoserine modification.

The protein belongs to the G-protein coupled receptor 1 family. Vasopressin/oxytocin receptor subfamily.

The protein localises to the cell membrane. In terms of biological role, receptor for oxytocin. The activity of this receptor is mediated by G proteins which activate a phosphatidylinositol-calcium second messenger system. In Macaca mulatta (Rhesus macaque), this protein is Oxytocin receptor (OXTR).